The chain runs to 385 residues: MNPVPAQREYFLDSIRAWLMLLGIPFHISLIYSSHTWHVNSAEPSLWLTLFNDFIHSFRMQVFFVISGYFSYMLFLRYPLKKWWKVRVERVGIPMLTAIPLLTLPQFIMLQYVKGKAESWPGLSLYDKYNTLAWELISHLWFLLVLVVMTTLCVWIFKRIRNNLENSDKTNKKFSMVKLSVIFLCLGIGYAVIRRTIFIVYPPILSNGMFNFIVMQTLFYLPFFILGALAFIFPHHKALFTTPSRGCTLAAALAFVAYLLNQRYGSGDAWMYETESVITMVLGLWMVNVVFSFGHRLLNFQSARVTYFVNASLFIYLVHHPLTLFFGAYITPHITSNWLGFLCGLIFVVGIAIILYEIHLRIPLLKFLFSGKPVVKRENDKAPAR.

Helical transmembrane passes span 17–37, 60–80, 91–111, 137–157, 173–193, 212–232, 239–259, 274–294, 311–331, and 338–358; these read AWLM…SHTW, MQVF…RYPL, VGIP…IMLQ, ISHL…VWIF, KFSM…YAVI, FIVM…LAFI, LFTT…VAYL, TESV…FSFG, ASLF…AYIT, and WLGF…LYEI.

The protein belongs to the acyltransferase 3 family. OpgC subfamily.

The protein localises to the cell membrane. It participates in glycan metabolism; osmoregulated periplasmic glucan (OPG) biosynthesis. In terms of biological role, necessary for the succinyl substitution of periplasmic glucans. Could catalyze the transfer of succinyl residues from the cytoplasmic side of the membrane to the nascent glucan backbones on the periplasmic side of the membrane. This is Glucans biosynthesis protein C from Escherichia coli O139:H28 (strain E24377A / ETEC).